A 562-amino-acid chain; its full sequence is MKLRGDAREVYKRLLSRLESMIKLGEARTFLKKFEPTSDREEIIKRQNYLKEGLKNVRDDLEEYLLSIRPIRFRREFFHDRILLVSDEEVEEAEKLDLCPVTSDPSEIEDYPLILSTIGYGIEVEVKPSHIAPELYIIPLWENRDVLEALSKVFPGGAADKILISLKEIEEIFKKMEILENLDEIIVEKEKELNRKIEEKLERFKLTLSGRDLVEFMKALRAGNLEYLFHKFSALNDEIIEEINKAEKEISDVLGISVEIFPRDFPVEVPPEQIEALKRELEREFKIEFYLKSRETVEKILPHLQKLKEEIQKAYELYFLLVVKKFTRDFVFPEIVEEGIGFIEGRNLFIENPQPVSYFVGKSYGNFPGVEEANIVILTGANSGGKTSLLELISQIVILAHMGFPVPAKKAWFTVLDEIFFFKRKRSVYGAGAFETSLKGLVRAIKGKGKKLILIDEFESITEPGAAAKILAELLKIAYEKGFFVVIVSHLGEDLKREIPFARVDGIEAKGLDENLNLIVDRQPKFGVIGRSTPELIVERLARKGRGEEKMIMNRILKKFRK.

Glycine 380–threonine 387 is a binding site for ATP.

Belongs to the DNA mismatch repair MutS family. Archaeal Muts2 subfamily. In terms of assembly, multimer. Requires Co(2+) as cofactor. It depends on Mn(2+) as a cofactor.

Its function is as follows. Has ATPase and non-specific DNA-binding activities. May be involved in recombination and/or recombinational repair. Not involved in mismatch repair. The sequence is that of DNA-binding protein MutS2 from Pyrococcus furiosus (strain ATCC 43587 / DSM 3638 / JCM 8422 / Vc1).